Consider the following 257-residue polypeptide: MLAKRIIPCLDVKDGQVVKGVQFRNHEIIGDIVPLAQRYAEEGADELVFYDITASSDGRVVDKSWVARVAEVIDIPFCVAGGIKTAEDAAKILEFGADKVSINSPALANPELITELADKFGVQCIVVGIDSYFDKDTGKYQVYQFTGDEERTKATKWETKDWVQEVQKRGAGEIVLNMMNQDGVRNGYDLEQLNMVREVCYVPLIASGGAGEMVHFADAYKKTNVDGALAASVFHKQIINIGELKDYLAEQDVEVRR.

Active-site residues include Asp-11 and Asp-130.

Belongs to the HisA/HisF family. Heterodimer of HisH and HisF.

The protein resides in the cytoplasm. It carries out the reaction 5-[(5-phospho-1-deoxy-D-ribulos-1-ylimino)methylamino]-1-(5-phospho-beta-D-ribosyl)imidazole-4-carboxamide + L-glutamine = D-erythro-1-(imidazol-4-yl)glycerol 3-phosphate + 5-amino-1-(5-phospho-beta-D-ribosyl)imidazole-4-carboxamide + L-glutamate + H(+). The protein operates within amino-acid biosynthesis; L-histidine biosynthesis; L-histidine from 5-phospho-alpha-D-ribose 1-diphosphate: step 5/9. Its function is as follows. IGPS catalyzes the conversion of PRFAR and glutamine to IGP, AICAR and glutamate. The HisF subunit catalyzes the cyclization activity that produces IGP and AICAR from PRFAR using the ammonia provided by the HisH subunit. In Aliivibrio fischeri (strain ATCC 700601 / ES114) (Vibrio fischeri), this protein is Imidazole glycerol phosphate synthase subunit HisF.